The sequence spans 313 residues: Aspartate carbamoyltransferase catalytic subunit (313 aa).

Arg58 and Thr59 together coordinate carbamoyl phosphate. Lys86 lines the L-aspartate pocket. Arg108, His136, and Gln139 together coordinate carbamoyl phosphate. Arg169 and Arg223 together coordinate L-aspartate. Residues Gly264 and Pro265 each coordinate carbamoyl phosphate.

The protein belongs to the aspartate/ornithine carbamoyltransferase superfamily. ATCase family. In terms of assembly, heterododecamer (2C3:3R2) of six catalytic PyrB chains organized as two trimers (C3), and six regulatory PyrI chains organized as three dimers (R2).

It catalyses the reaction carbamoyl phosphate + L-aspartate = N-carbamoyl-L-aspartate + phosphate + H(+). The protein operates within pyrimidine metabolism; UMP biosynthesis via de novo pathway; (S)-dihydroorotate from bicarbonate: step 2/3. In terms of biological role, catalyzes the condensation of carbamoyl phosphate and aspartate to form carbamoyl aspartate and inorganic phosphate, the committed step in the de novo pyrimidine nucleotide biosynthesis pathway. The chain is Aspartate carbamoyltransferase catalytic subunit from Ruminiclostridium cellulolyticum (strain ATCC 35319 / DSM 5812 / JCM 6584 / H10) (Clostridium cellulolyticum).